We begin with the raw amino-acid sequence, 320 residues long: Phospho-N-acetylmuramoyl-pentapeptide-transferase (320 aa).

9 helical membrane-spanning segments follow: residues 5 to 25 (LWAL…LIKF), 51 to 71 (MGGL…GAAY), 76 to 96 (GVVA…IGGI), 124 to 144 (VVIM…IPMI), 145 to 165 (GTIN…VGWS), 176 to 196 (GLLA…AMHM), 198 to 218 (NHII…FLIF), 233 to 255 (LALG…LIWF), and 298 to 318 (WQID…GIFY).

It belongs to the glycosyltransferase 4 family. MraY subfamily. Mg(2+) is required as a cofactor.

Its subcellular location is the cell membrane. It catalyses the reaction UDP-N-acetyl-alpha-D-muramoyl-L-alanyl-gamma-D-glutamyl-L-lysyl-D-alanyl-D-alanine + di-trans,octa-cis-undecaprenyl phosphate = Mur2Ac(oyl-L-Ala-gamma-D-Glu-L-Lys-D-Ala-D-Ala)-di-trans,octa-cis-undecaprenyl diphosphate + UMP. It participates in cell wall biogenesis; peptidoglycan biosynthesis. In terms of biological role, catalyzes the initial step of the lipid cycle reactions in the biosynthesis of the cell wall peptidoglycan: transfers peptidoglycan precursor phospho-MurNAc-pentapeptide from UDP-MurNAc-pentapeptide onto the lipid carrier undecaprenyl phosphate, yielding undecaprenyl-pyrophosphoryl-MurNAc-pentapeptide, known as lipid I. The sequence is that of Phospho-N-acetylmuramoyl-pentapeptide-transferase from Leuconostoc citreum (strain KM20).